Here is a 369-residue protein sequence, read N- to C-terminus: MIKLKQLIAATLLLSAAFGAHAERLKDIASISGVRANQLIGYGLVVGLNGTGDQTTQTPFTLQTFNNMLSQFGIKVPAGSGTVQLKNVAAVAVYADLPAFAKPGQTVDITVSSIGNSKSLRGGALLMTPMKGVDGNVYAIAQGNLVVGGFDAEGRDGSKITVNVPSSGRIPGGASVERSVPSGFNQGNTLTLNLNRSDFTTAKRVVDKINELLGPGVAQALDGGSVRVTAPLDPGQRVDYLSILENLEVDPGQTAAKVIINSRTGTIVIGQNVKVSPAAVTHGSLTVTITEDPIVSQPGALSGGQTAVVPRSRVNAQQELHPMFKFGPGTTLDEIVRAVNQVGAAPGDLMAILEALKQAGALQADLIVI.

Positions 1-22 are cleaved as a signal peptide; sequence MIKLKQLIAATLLLSAAFGAHA.

The protein belongs to the FlgI family. As to quaternary structure, the basal body constitutes a major portion of the flagellar organelle and consists of four rings (L,P,S, and M) mounted on a central rod.

It is found in the periplasm. The protein localises to the bacterial flagellum basal body. Functionally, assembles around the rod to form the L-ring and probably protects the motor/basal body from shearing forces during rotation. In Pseudomonas syringae pv. tomato (strain ATCC BAA-871 / DC3000), this protein is Flagellar P-ring protein.